The primary structure comprises 1402 residues: MSGARTVSTPTPPQTGGGVEPQANGETPQVAVIVRSDDRSQGAIIGGRPGLPGPEHSPSESQPSSPSPTPSPPPILEPGSEPNLAVLSLPGDTMTSGMIQMPVEEPAPISREAGEPYCLSPEPTPLAEPILEVEVTLSKPVPVSEFSSSPIQVLTPLASHKMEIHEPNGVVPSEDLEPEVESSPELAPPPPPACLSESPVPIAPTTQPEELLNGAPSPPAVDLSPVCEPEDQAKEDTASATPPAVPSATPATAPPATSPAQEEEGEEEEEEEEGEAGAAESDKGGEDLHPTESTPVPGHLPQNVEAVAATQVAVSVPKRRRKIKELNKKEAVGDLLDAFKEVNPAVPEVENQPPAGNNPTPESEGSSGPSRPEEADETWDAKEDKIHNAENIQPGEQKYEYKSDQWRPLNLEEKKRYDREFLLGFQFIFCQYAEAGGLPHISDVVLEKANKTPLRPLDPSRLSGINCGPDFTPSFANLGRPALSSRGPPRGGPGGELPRGAAGLGPRRSLQPRPPKGARKLIASVIMTEDIKLNKAEKAWKPSSKRTAADKDRGEEDADGSKTQDLFRRVRSILNKLTPQMFQQLMKQVTQLAIDTEGASKGSLTSSLRRPFQNPTSQWPSQHVPLPHGAESATTEKPTVTVNFRKLLLNRCQKEFEKDKDDDEVFEKKQKEMDEAATAEERERLKEELEEARDIARRCSLGNIKFIGELFKLKMLTEAIMHDCVVKLLRHDEESLEFLCRLLTTIGKDLDFEKAKPRMDQYFNQMEKIIKEKKTSSRIRFMLQDVLDLRQSNWVPRRGDQGPKTIDQIHKEAEMEEHREHIKVQQLMAKGSDKRRGGPPGPPISRGLPLVDDGGWNTVPISKGSRPIDTSRLTKITKPGSIDSNNQLFAPGGRLSWGKGSSGSGAKPSDAASEVSRPATSTLNRFSALQQAVPTESTDNRRVVQRSSLSRERGGKAGEPRRRLERSERGGDRGDRLDRARTPATKRSFSKEVEERSRERPSQPEGLRKAASLTEDRDRGRDAAKREAALPPVSCAKAALSEEELEKKSKAIIEEYLHLNDMKEAVQCVQELASPSLLFIFVRHGIESTLERSAIARERMGQLLHQLLCAGHLSTAQYYQGLYEILELAEDMEIDIPHVWLYLAELVTPIMQEGGVPMGELFREITKHLRPLGKAASLLLEILRLLCKSKGPKKVAYCGVRLGSAGKNFCLEGQDVGAFITEQKVEYTLGEESEAPGQRALSSEELSRQLEKVLKEGSSNQRVFDWIEANLSEQQIASNTLVRALMTAVCYSAIIFETPLRVDVAVLKGDRICYRNTCVIAEGAARLYALQALVVTLEQPANLLRMFFDALYDEDVVKEEAFYSWESSKDPAEQQGKGVALKSVTAFFKWLREVEEEESDHN.

2 disordered regions span residues 1–123 (MSGA…SPEP) and 165–402 (HEPN…YEYK). Phosphothreonine is present on residues T11 and T27. Residues 53–64 (GPEHSPSESQPS) show a composition bias toward low complexity. The span at 65 to 76 (SPSPTPSPPPIL) shows a compositional bias: pro residues. Residue S120 is modified to Phosphoserine. Residues 238–251 (ASATPPAVPSATPA) show a composition bias toward low complexity. Residues 261-275 (QEEEGEEEEEEEEGE) show a composition bias toward acidic residues. 2 stretches are compositionally biased toward basic and acidic residues: residues 280 to 290 (ESDKGGEDLHP) and 324 to 340 (KELNKKEAVGDLLDAFK). The segment covering 359–370 (PTPESEGSSGPS) has biased composition (low complexity). The span at 379–388 (WDAKEDKIHN) shows a compositional bias: basic and acidic residues. T452 is modified (phosphothreonine). Disordered stretches follow at residues 476 to 517 (ANLG…PPKG), 536 to 563 (AEKAWKPSSKRTAADKDRGEEDADGSKT), 600 to 636 (SKGSLTSSLRRPFQNPTSQWPSQHVPLPHGAESATTE), and 828 to 1028 (MAKG…KREA). Positions 479-488 (GRPALSSRGP) are enriched in low complexity. Residues R490 and R499 each carry the omega-N-methylarginine modification. Residues 547–563 (TAADKDRGEEDADGSKT) show a composition bias toward basic and acidic residues. The MIF4G domain occupies 567-793 (FRRVRSILNK…QDVLDLRQSN (227 aa)). Over residues 602–621 (GSLTSSLRRPFQNPTSQWPS) the composition is skewed to polar residues. S832 is subject to Phosphoserine. Omega-N-methylarginine is present on residues R836 and R846. S881 and S896 each carry phosphoserine. Over residues 892-913 (GGRLSWGKGSSGSGAKPSDAAS) the composition is skewed to low complexity. At K899 the chain carries N6-acetyllysine. Residues 918–937 (PATSTLNRFSALQQAVPTES) are compositionally biased toward polar residues. 2 positions are modified to phosphoserine: S948 and S950. Residues 949–981 (LSRERGGKAGEPRRRLERSERGGDRGDRLDRAR) show a composition bias toward basic and acidic residues. S988 carries the post-translational modification Phosphoserine; by PKC/PRKCA. A compositionally biased stretch (basic and acidic residues) spans 989–1028 (FSKEVEERSRERPSQPEGLRKAASLTEDRDRGRDAAKREA). A phosphoserine mark is found at S990, S997, and S1012. T1014 is subject to Phosphothreonine. Residues S1034 and S1041 each carry the phosphoserine modification. An MI domain is found at 1044–1166 (ELEKKSKAII…PMGELFREIT (123 aa)). The region spanning 1231–1401 (EESEAPGQRA…REVEEEESDH (171 aa)) is the W2 domain. At S1399 the chain carries Phosphoserine.

The protein belongs to the eukaryotic initiation factor 4G family. EIF4F is a multi-subunit complex, the composition of which varies with external and internal environmental conditions. It is composed of at least EIF4A, EIF4E (cap-binding) and EIF4G1/EIF4G3. Interacts with eIF3 complex, mutually exclusive with EIF4A1 or EIF4A2, EIF4E and through its N-terminus with PABPC1. Interacts with EIF4E or with EIF1 (mutually exclusive) through a common binding site. Interacts through its C-terminus with the serine/threonine kinases MKNK1, and with MKNK2. Appears to act as a scaffold protein, holding these enzymes in place to phosphorylate EIF4E. Non-phosphorylated EIF4EBP1 competes with EIF4G1/EIF4G3 to interact with EIF4E; insulin stimulated MAP-kinase (MAPK1 and MAPK3) phosphorylation of EIF4EBP1 causes dissociation of the complex allowing EIF4G1/EIF4G3 to bind and consequent initiation of translation. EIF4G1/EIF4G3 interacts with PABPC1 to bring about circularization of the mRNA. Interacts with EIF4E3. Interacts with CIRBP and MIF4GD. Interacts with RBM4. Interacts with HNRNPD/AUF1; the interaction requires RNA. Interacts with DDX3X; the interaction requires RNA. Interacts with DAZAP2. Post-translationally, phosphorylated at multiple sites in vivo. Phosphorylation at Ser-988 by PRKCA induces binding to MKNK1.

The protein localises to the cytoplasm. The protein resides in the nucleus. Its subcellular location is the stress granule. Functionally, component of the protein complex eIF4F, which is involved in the recognition of the mRNA cap, ATP-dependent unwinding of 5'-terminal secondary structure and recruitment of mRNA to the ribosome. Exists in two complexes, either with EIF1 or with EIF4E (mutually exclusive). Together with EIF1, is required for leaky scanning, in particular for avoiding cap-proximal start codon. Together with EIF4E, antagonizes the scanning promoted by EIF1-EIF4G1 and locates the start codon (through a TISU element) without scanning. As a member of the eIF4F complex, required for endoplasmic reticulum stress-induced ATF4 mRNA translation. The protein is Eukaryotic translation initiation factor 4 gamma 1 (EIF4G1) of Oryctolagus cuniculus (Rabbit).